A 479-amino-acid chain; its full sequence is MSLVLKKSIDDATVRDKKVLIRVDFNVPVKNGKITNDFRIRSALPTIQKVLKEGGSCILMSHLGRPKGARMSDPSPEKGVRGYEEAATLRPVAARISELLGQKVEFAPDCLDAASYASKLKNADVLLLENVRFYAEEGSKKEEERDAMAKVLASYGDVYVSDAFGTAHRDSATMTGIPKVLGAGYAGYLMEKEINYFSRVLNNPPRPLVAIVGGAKVSDKIQLLDNMLGRINYLVIGGAMAYTFQKAQGRKIGISMCEEDKLDLAKSLLKKAQERNVQVFLPVDHVCNKEFKAADSPLVTESVDVPDGYMALDIGPRTIHMYEEVIGRCKSAIWNGPMGVFEMPCYSKGTFAVAKAMGTGTQKNGLMSIIGGGDSASAAELSGEAKNMSHVSTGGGASLELLEGKTLPGVAILTDKDVKERGASCKFAFGVGSPSREACPLRCGHIFGGASIVREIVKIVVALLIGIFIGRRMSTKLIR.

The (2R)-3-phosphoglycerate site is built by V23, D24, F25, N26, R39, S61, H62, G64, R65, R132, H168, and R169. ADP contacts are provided by G214 and A215. G214 is a binding site for CDP. AMP is bound by residues A215 and K216. A215 contributes to the ATP binding site. Position 215 (A215) interacts with Mg(2+). Residue K216 coordinates (2R)-3-phosphoglycerate. D219 contacts CDP. Residue D219 participates in Mg(2+) binding. ADP-binding residues include K220 and G238. K220 contributes to the AMP binding site. ATP is bound at residue K220. Position 238 (G238) interacts with CDP. The AMP site is built by A239 and A311. 2 residues coordinate ATP: A239 and A311. Residues A311 and N335 each contribute to the ADP site. CDP is bound by residues G336 and F341. 4 residues coordinate ADP: F341, E342, D374, and S375. E342 provides a ligand contact to AMP. Positions 342, 374, and 375 each coordinate ATP. A Mg(2+)-binding site is contributed by D374.

The protein belongs to the phosphoglycerate kinase family. As to quaternary structure, monomer. Mg(2+) is required as a cofactor.

The protein localises to the glycosome. The enzyme catalyses (2R)-3-phosphoglycerate + ATP = (2R)-3-phospho-glyceroyl phosphate + ADP. Its pathway is carbohydrate degradation; glycolysis; pyruvate from D-glyceraldehyde 3-phosphate: step 2/5. In Leishmania major, this protein is Phosphoglycerate kinase, glycosomal (PGKC).